A 116-amino-acid polypeptide reads, in one-letter code: Proline-rich protein 9 (116 aa).

The polypeptide is Proline-rich protein 9 (PRR9) (Bos taurus (Bovine)).